Consider the following 139-residue polypeptide: Large ribosomal subunit protein uL22 (139 aa).

The interval 1–22 (MVSENEKTRRPKRSIQHRQNKD) is disordered. Positions 9-18 (RRPKRSIQHR) are enriched in basic residues.

Belongs to the universal ribosomal protein uL22 family. In terms of assembly, part of the 50S ribosomal subunit.

Its function is as follows. This protein binds specifically to 23S rRNA; its binding is stimulated by other ribosomal proteins, e.g. L4, L17, and L20. It is important during the early stages of 50S assembly. It makes multiple contacts with different domains of the 23S rRNA in the assembled 50S subunit and ribosome. In terms of biological role, the globular domain of the protein is located near the polypeptide exit tunnel on the outside of the subunit, while an extended beta-hairpin is found that lines the wall of the exit tunnel in the center of the 70S ribosome. This chain is Large ribosomal subunit protein uL22, found in Pseudothermotoga lettingae (strain ATCC BAA-301 / DSM 14385 / NBRC 107922 / TMO) (Thermotoga lettingae).